A 387-amino-acid chain; its full sequence is Methyltransferase phomM' (387 aa).

Residues 98–223 (PHRPKDLHIL…QSVADLFTTL (126 aa)) form a methyltransferase domain region.

It belongs to the class I-like SAM-binding methyltransferase superfamily. Erg6/SMT family.

It functions in the pathway mycotoxin biosynthesis. Methyltransferase; part of the gene cluster that mediates the biosynthesis of the phomopsins, a group of hexapeptide mycotoxins which infects lupins and causes lupinosis disease in livestock. Within the pathway, phomM' acts as an S-adenosylmethionine-dependent alpha-N-methyltransferase that catalyzes two successive N-methylation reactions, converting N-desmethyl-phomopsin A to phomopsin A and phomopsin A further to an N,N-dimethylated congener called phomopsin E. The pathway starts with the processing of the precursor phomA' by several endopeptidases including kexin proteases as well as the cluster-specific S41 family peptidase phomP1 and the oligopeptidase phomG' to produce 10 identical copies of the hexapeptide Tyr-Val-Ile-Pro-Ile-Asp. After being excised from the precursor peptide, the core peptides are cyclized and modified post-translationally by enzymes encoded within the gene cluster. The timing and order of proteolysis of the phomA' precursor and PTMs are still unknown. Two tyrosinase-like enzymes, phomQ1' and phomQ2, catalyze the chlorination and hydroxylation of Tyr, respectively. PhomYb, is proposed to be involved in the construction of the macrocyclic structure. The other 4 ustYa family proteins may be involved in PTMs that generate the unique structure of phomopsin A. PhomYa' is required for the hydroxylation of C-beta of Tyr. PhomYc', phomYd', and phomYe are responsible for the biosynthesis of 2,3-dehydroisoleucine (dIle), 2,3-dehydroaspartic acid (dAsp), and 3,4-dehydroproline (dPro), respectively. While dIle formation by phomYc' is indispensable for the installation of dAsp by phomYd', the order of the other PTMs have not been elucidated yet. Most of the biosynthetic enzymes likely have broad substrate specificity, and thus, there might be a metabolic grid from a precursor to phomopsin A. The enzyme(s) responsible for the biosynthesis of 3,4-dehydrovaline (dVal) have also not been identified yet. Finally, phomM' acts as an S-adenosylmethionine-dependent alpha-N-methyltransferase that catalyzes two successive N-methylation reactions, converting N-desmethyl-phomopsin A to phomopsin A and phomopsin A further to an N,N-dimethylated congener called phomopsin E. The sequence is that of Methyltransferase phomM' from Diaporthe leptostromiformis (Lupinosis disease fungus).